Here is a 350-residue protein sequence, read N- to C-terminus: Uroporphyrinogen decarboxylase (350 aa).

Substrate-binding positions include 28–32 (RQAGR), Phe47, Asp78, Tyr155, Ser210, and His325.

It belongs to the uroporphyrinogen decarboxylase family. In terms of assembly, homodimer.

It localises to the cytoplasm. It catalyses the reaction uroporphyrinogen III + 4 H(+) = coproporphyrinogen III + 4 CO2. Its pathway is porphyrin-containing compound metabolism; protoporphyrin-IX biosynthesis; coproporphyrinogen-III from 5-aminolevulinate: step 4/4. Catalyzes the decarboxylation of four acetate groups of uroporphyrinogen-III to yield coproporphyrinogen-III. This Synechocystis sp. (strain ATCC 27184 / PCC 6803 / Kazusa) protein is Uroporphyrinogen decarboxylase.